A 384-amino-acid chain; its full sequence is S-adenosylmethionine synthase (384 aa).

H15 contributes to the ATP binding site. Position 17 (D17) interacts with Mg(2+). Position 43 (E43) interacts with K(+). 2 residues coordinate L-methionine: E56 and Q99. A flexible loop region spans residues 99–109 (QSPDINQGVDK). ATP is bound by residues 164–166 (DAK), 230–231 (RF), D239, 245–246 (RK), A262, and K266. D239 is an L-methionine binding site. An L-methionine-binding site is contributed by K270.

This sequence belongs to the AdoMet synthase family. As to quaternary structure, homotetramer; dimer of dimers. Mg(2+) is required as a cofactor. It depends on K(+) as a cofactor.

It localises to the cytoplasm. It catalyses the reaction L-methionine + ATP + H2O = S-adenosyl-L-methionine + phosphate + diphosphate. It participates in amino-acid biosynthesis; S-adenosyl-L-methionine biosynthesis; S-adenosyl-L-methionine from L-methionine: step 1/1. Catalyzes the formation of S-adenosylmethionine (AdoMet) from methionine and ATP. The overall synthetic reaction is composed of two sequential steps, AdoMet formation and the subsequent tripolyphosphate hydrolysis which occurs prior to release of AdoMet from the enzyme. The protein is S-adenosylmethionine synthase of Vibrio vulnificus (strain YJ016).